The chain runs to 255 residues: Thiazole synthase (255 aa).

K95 (schiff-base intermediate with DXP) is an active-site residue. Residues G156, 182 to 183 (AG), and 204 to 205 (NT) contribute to the 1-deoxy-D-xylulose 5-phosphate site.

This sequence belongs to the ThiG family. In terms of assembly, homotetramer. Forms heterodimers with either ThiH or ThiS.

Its subcellular location is the cytoplasm. The catalysed reaction is [ThiS sulfur-carrier protein]-C-terminal-Gly-aminoethanethioate + 2-iminoacetate + 1-deoxy-D-xylulose 5-phosphate = [ThiS sulfur-carrier protein]-C-terminal Gly-Gly + 2-[(2R,5Z)-2-carboxy-4-methylthiazol-5(2H)-ylidene]ethyl phosphate + 2 H2O + H(+). Its pathway is cofactor biosynthesis; thiamine diphosphate biosynthesis. Its function is as follows. Catalyzes the rearrangement of 1-deoxy-D-xylulose 5-phosphate (DXP) to produce the thiazole phosphate moiety of thiamine. Sulfur is provided by the thiocarboxylate moiety of the carrier protein ThiS. In vitro, sulfur can be provided by H(2)S. This Vibrio parahaemolyticus serotype O3:K6 (strain RIMD 2210633) protein is Thiazole synthase.